The primary structure comprises 141 residues: Nucleoside diphosphate kinase (141 aa).

Residues Lys-11, Phe-59, Arg-87, Thr-93, Arg-104, and Asn-114 each contribute to the ATP site. The active-site Pros-phosphohistidine intermediate is the His-117.

The protein belongs to the NDK family. In terms of assembly, homotetramer. Mg(2+) is required as a cofactor.

The protein resides in the cytoplasm. The enzyme catalyses a 2'-deoxyribonucleoside 5'-diphosphate + ATP = a 2'-deoxyribonucleoside 5'-triphosphate + ADP. It catalyses the reaction a ribonucleoside 5'-diphosphate + ATP = a ribonucleoside 5'-triphosphate + ADP. Its function is as follows. Major role in the synthesis of nucleoside triphosphates other than ATP. The ATP gamma phosphate is transferred to the NDP beta phosphate via a ping-pong mechanism, using a phosphorylated active-site intermediate. This is Nucleoside diphosphate kinase from Mannheimia succiniciproducens (strain KCTC 0769BP / MBEL55E).